The following is a 980-amino-acid chain: Peroxisomal ATPase PEX6 (980 aa).

Arg119 bears the Omega-N-methylarginine mark. ATP is bound by residues 470–477 (GPPGCGKT) and 744–751 (GPPGTGKT).

It belongs to the AAA ATPase family. As to quaternary structure, interacts with PEX1; forming the PEX1-PEX6 AAA ATPase complex, which is composed of a heterohexamer formed by a trimer of PEX1-PEX6 dimers. Interacts with PEX26; interaction is direct and promotes recruitment to peroxisomal membranes. Interacts with ZFAND6. As to expression, expressed in the retina, at higher levels in the photoreceptor layer at the joint between the outer and inner segments.

It is found in the cytoplasm. It localises to the cytosol. Its subcellular location is the peroxisome membrane. The protein localises to the cell projection. The protein resides in the cilium. It is found in the photoreceptor outer segment. The enzyme catalyses ATP + H2O = ADP + phosphate + H(+). Functionally, component of the PEX1-PEX6 AAA ATPase complex, a protein dislocase complex that mediates the ATP-dependent extraction of the PEX5 receptor from peroxisomal membranes, an essential step for PEX5 recycling. Specifically recognizes PEX5 monoubiquitinated at 'Cys-11', and pulls it out of the peroxisome lumen through the PEX2-PEX10-PEX12 retrotranslocation channel. Extraction by the PEX1-PEX6 AAA ATPase complex is accompanied by unfolding of the TPR repeats and release of bound cargo from PEX5. In Homo sapiens (Human), this protein is Peroxisomal ATPase PEX6.